A 110-amino-acid chain; its full sequence is Large ribosomal subunit protein uL24 (110 aa).

It belongs to the universal ribosomal protein uL24 family. In terms of assembly, part of the 50S ribosomal subunit.

In terms of biological role, one of two assembly initiator proteins, it binds directly to the 5'-end of the 23S rRNA, where it nucleates assembly of the 50S subunit. Functionally, one of the proteins that surrounds the polypeptide exit tunnel on the outside of the subunit. This Ureaplasma parvum serovar 3 (strain ATCC 27815 / 27 / NCTC 11736) protein is Large ribosomal subunit protein uL24.